A 457-amino-acid chain; its full sequence is MSLYFNADTMRIERSSVHEPKRNRNVFLDVKPIADDANVNVPPRQAARRNATVFNNRVGFPPLTPKEAFVDAVPADQTCMVFESSKPIYLVLRAIGVLPYTRLPSGGTAFVLASPSMTYCVLFFLLLTVYIAFILLNRIEIVRTLEGRFEESVIAYLFIVNILPILIIPLMWYESRKVVSVVNGWVDFETVYRETTGRALELRLRTKAQVIAILLPILCSLSVAITHVTMVDFKLLQVIPYCVLDTITYMMGGYWYMACETLSITAKILAEDFQRALRHVGPAAKVSEYRSLWLRLSKLARDTGFSTCYTFTFICLYLFFIITLSIYGLMSQISDGFGVKDIGLAVTAFCSVGLLFYICDEAHYASFNVRTNFQKKLLMVELSWMNTDAQTEINMFLRATEMNPSSINLGGFFDVNRTLFKSLLATMVTYLVVLLQFQISIPDEPSAMLMHSNSSHS.

At 1–115 (MSLYFNADTM…GGTAFVLASP (115 aa)) the chain is on the cytoplasmic side. Residues 116 to 136 (SMTYCVLFFLLLTVYIAFILL) form a helical membrane-spanning segment. The Extracellular portion of the chain corresponds to 137 to 152 (NRIEIVRTLEGRFEES). Residues 153-173 (VIAYLFIVNILPILIIPLMWY) traverse the membrane as a helical segment. The Cytoplasmic portion of the chain corresponds to 174-209 (ESRKVVSVVNGWVDFETVYRETTGRALELRLRTKAQ). The chain crosses the membrane as a helical span at residues 210 to 230 (VIAILLPILCSLSVAITHVTM). At 231–237 (VDFKLLQ) the chain is on the extracellular side. A helical transmembrane segment spans residues 238-258 (VIPYCVLDTITYMMGGYWYMA). Residues 259–309 (CETLSITAKILAEDFQRALRHVGPAAKVSEYRSLWLRLSKLARDTGFSTCY) are Cytoplasmic-facing. The helical transmembrane segment at 310–330 (TFTFICLYLFFIITLSIYGLM) threads the bilayer. The Extracellular portion of the chain corresponds to 331–341 (SQISDGFGVKD). Residues 342-362 (IGLAVTAFCSVGLLFYICDEA) traverse the membrane as a helical segment. The Cytoplasmic portion of the chain corresponds to 363–421 (HYASFNVRTNFQKKLLMVELSWMNTDAQTEINMFLRATEMNPSSINLGGFFDVNRTLFK). Residues 422–442 (SLLATMVTYLVVLLQFQISIP) traverse the membrane as a helical segment. Residues 443–457 (DEPSAMLMHSNSSHS) lie on the Extracellular side of the membrane. A glycan (N-linked (GlcNAc...) asparagine) is linked at Asn453.

It belongs to the insect chemoreceptor superfamily. Gustatory receptor (GR) family. Gr21a subfamily. As to expression, carbon dioxide-responsive neurons coexpress GPRgr22 and GPRgr24 in the maxillary palp, at both larval and adult life stages.

It is found in the cell membrane. Gustatory receptor which mediates acceptance or avoidance behavior, depending on its substrates. GPRgr22 and GPRgr24 together are sufficient for olfactory carbon dioxide-chemosensation. This Anopheles gambiae (African malaria mosquito) protein is Gustatory and odorant receptor 24.